The chain runs to 172 residues: Protein GrpE (172 aa).

Low complexity predominate over residues 1–11 (MSEENNSQNSN). Positions 1–22 (MSEENNSQNSNPPNPENGEIAS) are disordered.

Belongs to the GrpE family. In terms of assembly, homodimer.

Its subcellular location is the cytoplasm. Functionally, participates actively in the response to hyperosmotic and heat shock by preventing the aggregation of stress-denatured proteins, in association with DnaK and GrpE. It is the nucleotide exchange factor for DnaK and may function as a thermosensor. Unfolded proteins bind initially to DnaJ; upon interaction with the DnaJ-bound protein, DnaK hydrolyzes its bound ATP, resulting in the formation of a stable complex. GrpE releases ADP from DnaK; ATP binding to DnaK triggers the release of the substrate protein, thus completing the reaction cycle. Several rounds of ATP-dependent interactions between DnaJ, DnaK and GrpE are required for fully efficient folding. In Bdellovibrio bacteriovorus (strain ATCC 15356 / DSM 50701 / NCIMB 9529 / HD100), this protein is Protein GrpE.